The following is a 122-amino-acid chain: Large ribosomal subunit protein bL12 (122 aa).

This sequence belongs to the bacterial ribosomal protein bL12 family. Homodimer. Part of the ribosomal stalk of the 50S ribosomal subunit. Forms a multimeric L10(L12)X complex, where L10 forms an elongated spine to which 2 to 4 L12 dimers bind in a sequential fashion. Binds GTP-bound translation factors.

Forms part of the ribosomal stalk which helps the ribosome interact with GTP-bound translation factors. Is thus essential for accurate translation. The protein is Large ribosomal subunit protein bL12 of Mesoplasma florum (strain ATCC 33453 / NBRC 100688 / NCTC 11704 / L1) (Acholeplasma florum).